The following is a 467-amino-acid chain: ATP synthase subunit beta (467 aa).

150–157 contributes to the ATP binding site; sequence GGAGVGKT.

The protein belongs to the ATPase alpha/beta chains family. F-type ATPases have 2 components, CF(1) - the catalytic core - and CF(0) - the membrane proton channel. CF(1) has five subunits: alpha(3), beta(3), gamma(1), delta(1), epsilon(1). CF(0) has three main subunits: a(1), b(2) and c(9-12). The alpha and beta chains form an alternating ring which encloses part of the gamma chain. CF(1) is attached to CF(0) by a central stalk formed by the gamma and epsilon chains, while a peripheral stalk is formed by the delta and b chains.

It is found in the cell inner membrane. The enzyme catalyses ATP + H2O + 4 H(+)(in) = ADP + phosphate + 5 H(+)(out). Its function is as follows. Produces ATP from ADP in the presence of a proton gradient across the membrane. The catalytic sites are hosted primarily by the beta subunits. The sequence is that of ATP synthase subunit beta from Vibrio parahaemolyticus serotype O3:K6 (strain RIMD 2210633).